The chain runs to 359 residues: 3-dehydroquinate synthase (359 aa).

Residues 70 to 75, 105 to 109, 129 to 130, Lys142, Lys151, and 169 to 172 contribute to the NAD(+) site; these read DGEQYK, GVIGD, TT, and FYKT. Residues Glu184, His247, and His264 each contribute to the Zn(2+) site.

Belongs to the sugar phosphate cyclases superfamily. Dehydroquinate synthase family. Co(2+) serves as cofactor. Requires Zn(2+) as cofactor. NAD(+) is required as a cofactor.

The protein resides in the cytoplasm. It catalyses the reaction 7-phospho-2-dehydro-3-deoxy-D-arabino-heptonate = 3-dehydroquinate + phosphate. The protein operates within metabolic intermediate biosynthesis; chorismate biosynthesis; chorismate from D-erythrose 4-phosphate and phosphoenolpyruvate: step 2/7. Its function is as follows. Catalyzes the conversion of 3-deoxy-D-arabino-heptulosonate 7-phosphate (DAHP) to dehydroquinate (DHQ). The polypeptide is 3-dehydroquinate synthase (Francisella tularensis subsp. holarctica (strain OSU18)).